A 206-amino-acid chain; its full sequence is Protein-methionine-sulfoxide reductase heme-binding subunit MsrQ (206 aa).

The next 6 helical transmembrane spans lie at 7–27 (IIIH…LLSG), 43–63 (FLGF…KVFY), 77–97 (LGLW…ALEL), 112–132 (GYLI…LSSW), 142–162 (WWFY…IHYV), and 172–192 (SMLY…GLFI).

It belongs to the MsrQ family. In terms of assembly, heterodimer of a catalytic subunit (MsrP) and a heme-binding subunit (MsrQ). FMN serves as cofactor. The cofactor is heme b.

It localises to the cell inner membrane. Part of the MsrPQ system that repairs oxidized periplasmic proteins containing methionine sulfoxide residues (Met-O), using respiratory chain electrons. Thus protects these proteins from oxidative-stress damage caused by reactive species of oxygen and chlorine generated by the host defense mechanisms. MsrPQ is essential for the maintenance of envelope integrity under bleach stress, rescuing a wide series of structurally unrelated periplasmic proteins from methionine oxidation. MsrQ provides electrons for reduction to the reductase catalytic subunit MsrP, using the quinone pool of the respiratory chain. The chain is Protein-methionine-sulfoxide reductase heme-binding subunit MsrQ from Pasteurella multocida (strain Pm70).